An 800-amino-acid chain; its full sequence is MSKIIMNKKNNDTPMIKQYLSLKLHYPNMFLFYRLGDFYELFFDDAKRISLMLDITLTKRGYSSQKEIPMAGIPYTSLNRYLSKLLKIGESAVICEQTHIIDKRTGLIERKISRVVTPGTVIDEEFLSETKNNLLGSVYYSKKRFGYATLDLCSGNFYISEYDTFESFISELQRTDPEELLIQEDFLYMNFFEKRKGIRLCKLNDFNIDSAYQQLKCHFKTKNLKSFGVYQNNLAISAAGCLLKYLKFIQYSLLPHVKSIKVRYDCNHIFMNSATRKNLEIINNISGKKEHTLLSILDNTATPMGGRLLRKWLSAPIKDIKIINKRHNIIKSLKTVYMSLSLLLKGIGDLERIISRIACRSASPKDFVSMRSALLQFSKIIFVLNSTKSKTLELISCKIKEYNSILILLRRSLKVCPSKTIKEGNVISENYNKDLDKWRKIANNASEYLQYFEVSERKRLHITSLKVNNNRVLGYYVQISKKDIKLAPNNYKKIQTLKHCVRYSTLELLDYENNVNNAKDKVLEIENYLYNELFDFIIPYIDSLKISVNTISELDVLNNLTERACVLNYVCPVISDEYGILLTDSRHPVVENLLKTPFVKNSINLSKSSNMLIITGPNMGGKSTYMRQIALIVIMAYIGSFVPAKYARIGLCDKIFTRIGSADNLAYGESTFMMEMIEMSSILRNSTSNSLVLIDELGRGTSMHDGLSLAWACIEYLAGKINAMTLFSTHYFELTKLKNYYSNIRNMYFDVLEHNNEIVFTYVIKNGFINKSYGLVVAALAKLPKCILLSAKKKLKEFYP.

616–623 (GPNMGGKS) is a binding site for ATP.

It belongs to the DNA mismatch repair MutS family.

In terms of biological role, this protein is involved in the repair of mismatches in DNA. It is possible that it carries out the mismatch recognition step. This protein has a weak ATPase activity. This chain is DNA mismatch repair protein MutS, found in Buchnera aphidicola subsp. Baizongia pistaciae (strain Bp).